The primary structure comprises 88 residues: Large ribosomal subunit protein bL27 (88 aa).

The interval 1–21 (MAHKKGTGSTRNGRDSNAKRL) is disordered.

The protein belongs to the bacterial ribosomal protein bL27 family.

In Parasynechococcus marenigrum (strain WH8102), this protein is Large ribosomal subunit protein bL27.